A 255-amino-acid polypeptide reads, in one-letter code: Protein YIPF7 (255 aa).

The Cytoplasmic segment spans residues 1–124; it reads MSNLGQFDSD…ADGSIMNETD (124 aa). A helical membrane pass occupies residues 125–145; that stretch reads LTGPILFCMALGATLLLAGKV. Position 146 (Q146) is a topological domain, lumenal. The helical transmembrane segment at 147 to 167 threads the bilayer; that stretch reads FGYVYGMSAIGCLGIHALLNL. Over 168-180 the chain is Cytoplasmic; sequence MSSSGVSYGCVAS. The helical transmembrane segment at 181-201 threads the bilayer; the sequence is VLGYCLLPMVILSSCAIFFSL. The Lumenal portion of the chain corresponds to 202–204; sequence QGT. A helical transmembrane segment spans residues 205–225; that stretch reads FGTVSALVIIGWCSLSASKIF. Topologically, residues 226–234 are cytoplasmic; that stretch reads TSALAMEGQ. The helical transmembrane segment at 235–255 threads the bilayer; sequence QLLIAYPCALLYGLFALVTVF.

The protein belongs to the YIP1 family.

The protein resides in the endoplasmic reticulum membrane. The protein localises to the golgi apparatus. It is found in the cis-Golgi network membrane. It localises to the trans-Golgi network membrane. The sequence is that of Protein YIPF7 (YIPF7) from Bos taurus (Bovine).